Reading from the N-terminus, the 122-residue chain is uncharacterized protein (122 aa).

The first 20 residues, 1-20 (MGFHFCIWIIFLLPPPCKKC), serve as a signal peptide directing secretion.

The protein localises to the secreted. This is an uncharacterized protein from Homo sapiens (Human).